Reading from the N-terminus, the 356-residue chain is UDP-N-acetylglucosamine--N-acetylmuramyl-(pentapeptide) pyrophosphoryl-undecaprenol N-acetylglucosamine transferase (356 aa).

Residues 14–16 (TGG), Asn126, Arg162, Ser190, Ile244, and Gln289 contribute to the UDP-N-acetyl-alpha-D-glucosamine site.

It belongs to the glycosyltransferase 28 family. MurG subfamily.

The protein resides in the cell inner membrane. The catalysed reaction is di-trans,octa-cis-undecaprenyl diphospho-N-acetyl-alpha-D-muramoyl-L-alanyl-D-glutamyl-meso-2,6-diaminopimeloyl-D-alanyl-D-alanine + UDP-N-acetyl-alpha-D-glucosamine = di-trans,octa-cis-undecaprenyl diphospho-[N-acetyl-alpha-D-glucosaminyl-(1-&gt;4)]-N-acetyl-alpha-D-muramoyl-L-alanyl-D-glutamyl-meso-2,6-diaminopimeloyl-D-alanyl-D-alanine + UDP + H(+). The protein operates within cell wall biogenesis; peptidoglycan biosynthesis. Cell wall formation. Catalyzes the transfer of a GlcNAc subunit on undecaprenyl-pyrophosphoryl-MurNAc-pentapeptide (lipid intermediate I) to form undecaprenyl-pyrophosphoryl-MurNAc-(pentapeptide)GlcNAc (lipid intermediate II). The chain is UDP-N-acetylglucosamine--N-acetylmuramyl-(pentapeptide) pyrophosphoryl-undecaprenol N-acetylglucosamine transferase from Cupriavidus pinatubonensis (strain JMP 134 / LMG 1197) (Cupriavidus necator (strain JMP 134)).